The following is a 511-amino-acid chain: Bifunctional purine biosynthesis protein PurH (511 aa).

Residues 1–146 form the MGS-like domain; that stretch reads MTKRALVSVS…KNHADVTVVV (146 aa).

This sequence belongs to the PurH family.

The catalysed reaction is (6R)-10-formyltetrahydrofolate + 5-amino-1-(5-phospho-beta-D-ribosyl)imidazole-4-carboxamide = 5-formamido-1-(5-phospho-D-ribosyl)imidazole-4-carboxamide + (6S)-5,6,7,8-tetrahydrofolate. It catalyses the reaction IMP + H2O = 5-formamido-1-(5-phospho-D-ribosyl)imidazole-4-carboxamide. Its pathway is purine metabolism; IMP biosynthesis via de novo pathway; 5-formamido-1-(5-phospho-D-ribosyl)imidazole-4-carboxamide from 5-amino-1-(5-phospho-D-ribosyl)imidazole-4-carboxamide (10-formyl THF route): step 1/1. It functions in the pathway purine metabolism; IMP biosynthesis via de novo pathway; IMP from 5-formamido-1-(5-phospho-D-ribosyl)imidazole-4-carboxamide: step 1/1. The polypeptide is Bifunctional purine biosynthesis protein PurH (Shouchella clausii (strain KSM-K16) (Alkalihalobacillus clausii)).